The chain runs to 276 residues: Shikimate dehydrogenase (NADP(+)) (276 aa).

Residues 15-17 (SKS) and threonine 62 each bind shikimate. The Proton acceptor role is filled by lysine 66. Glutamate 78 is an NADP(+) binding site. Residues asparagine 87 and aspartate 103 each contribute to the shikimate site. NADP(+) contacts are provided by residues 127 to 131 (GAGGV), 150 to 155 (NRTHIK), and methionine 214. Tyrosine 216 contributes to the shikimate binding site. Glycine 239 contacts NADP(+).

The protein belongs to the shikimate dehydrogenase family. As to quaternary structure, homodimer.

The enzyme catalyses shikimate + NADP(+) = 3-dehydroshikimate + NADPH + H(+). The protein operates within metabolic intermediate biosynthesis; chorismate biosynthesis; chorismate from D-erythrose 4-phosphate and phosphoenolpyruvate: step 4/7. Its function is as follows. Involved in the biosynthesis of the chorismate, which leads to the biosynthesis of aromatic amino acids. Catalyzes the reversible NADPH linked reduction of 3-dehydroshikimate (DHSA) to yield shikimate (SA). This chain is Shikimate dehydrogenase (NADP(+)), found in Haemophilus ducreyi (strain 35000HP / ATCC 700724).